We begin with the raw amino-acid sequence, 211 residues long: Uridine kinase (211 aa).

12–19 contributes to the ATP binding site; the sequence is GGSGSGKT.

It belongs to the uridine kinase family.

The protein resides in the cytoplasm. The catalysed reaction is uridine + ATP = UMP + ADP + H(+). It catalyses the reaction cytidine + ATP = CMP + ADP + H(+). The protein operates within pyrimidine metabolism; CTP biosynthesis via salvage pathway; CTP from cytidine: step 1/3. It functions in the pathway pyrimidine metabolism; UMP biosynthesis via salvage pathway; UMP from uridine: step 1/1. In Bacillus velezensis (strain DSM 23117 / BGSC 10A6 / LMG 26770 / FZB42) (Bacillus amyloliquefaciens subsp. plantarum), this protein is Uridine kinase.